The primary structure comprises 292 residues: 4-hydroxy-tetrahydrodipicolinate synthase (292 aa).

Residue Thr-45 coordinates pyruvate. Tyr-133 (proton donor/acceptor) is an active-site residue. Catalysis depends on Lys-161, which acts as the Schiff-base intermediate with substrate. Residue Ile-203 coordinates pyruvate.

This sequence belongs to the DapA family. In terms of assembly, homotetramer; dimer of dimers.

The protein resides in the cytoplasm. The catalysed reaction is L-aspartate 4-semialdehyde + pyruvate = (2S,4S)-4-hydroxy-2,3,4,5-tetrahydrodipicolinate + H2O + H(+). It functions in the pathway amino-acid biosynthesis; L-lysine biosynthesis via DAP pathway; (S)-tetrahydrodipicolinate from L-aspartate: step 3/4. Catalyzes the condensation of (S)-aspartate-beta-semialdehyde [(S)-ASA] and pyruvate to 4-hydroxy-tetrahydrodipicolinate (HTPA). The polypeptide is 4-hydroxy-tetrahydrodipicolinate synthase (Vibrio vulnificus (strain YJ016)).